Consider the following 65-residue polypeptide: Disintegrin CC5 (65 aa).

A Disintegrin domain is found at 1–65 (MNSAHPCCDP…SDCPRNRYKS (65 aa)). 4 disulfides stabilise this stretch: Cys7/Cys30, Cys21/Cys27, Cys26/Cys51, and Cys39/Cys58. The Cell attachment site signature appears at 43-45 (RGD).

It belongs to the disintegrin family. Dimeric disintegrin subfamily. As to quaternary structure, homodimer; disulfide-linked. In terms of tissue distribution, expressed by the venom gland.

The protein localises to the secreted. Its function is as follows. Binds and inhibits integrins alpha-IIb/beta-3 (ITGA2B/ITGB3), alpha-V/beta-3 (ITGAV/ITGB3) and alpha-5/beta-1 (ITGA5/ITGB1). This is Disintegrin CC5 from Cerastes cerastes (Horned desert viper).